The following is a 294-amino-acid chain: 2-oxoglutaramate amidase (294 aa).

Residues 16 to 261 (LDVAAVQVKF…EAVLRATLNF (246 aa)) form the CN hydrolase domain. Catalysis depends on Glu55, which acts as the Proton acceptor. The active-site Proton donor is the Lys129. Cys168 (nucleophile) is an active-site residue.

It belongs to the carbon-nitrogen hydrolase superfamily. NIT1/NIT2 family.

The enzyme catalyses 2-oxoglutaramate + H2O = 2-oxoglutarate + NH4(+). The protein operates within alkaloid degradation; nicotine degradation. In terms of biological role, catalyzes the conversion of 2-oxoglutaramate to 2-oxoglutarate. Together with glutamate dehydrogenase, may form a physiologically relevant enzyme couple, leading to transformation of metabolically inert 2-oxoglutaramate derived from trihydroxypyridine into glutamate, a central compound of nitrogen metabolism. This is 2-oxoglutaramate amidase from Paenarthrobacter nicotinovorans (Arthrobacter nicotinovorans).